The chain runs to 223 residues: Ribonuclease HII (223 aa).

Residues 1 to 219 (MMIAGIDEAG…VENIREELEK (219 aa)) form the RNase H type-2 domain. The a divalent metal cation site is built by D7, E8, and D105.

Belongs to the RNase HII family. The cofactor is Mn(2+). It depends on Mg(2+) as a cofactor.

It is found in the cytoplasm. It carries out the reaction Endonucleolytic cleavage to 5'-phosphomonoester.. Functionally, endonuclease that specifically degrades the RNA of RNA-DNA hybrids. The protein is Ribonuclease HII of Methanosarcina acetivorans (strain ATCC 35395 / DSM 2834 / JCM 12185 / C2A).